A 232-amino-acid polypeptide reads, in one-letter code: Orotidine 5'-phosphate decarboxylase (232 aa).

Residues D11, K33, 60-69 (DLKFHDIPHT), T119, R180, Q189, G209, and R210 each bind substrate. K62 acts as the Proton donor in catalysis.

This sequence belongs to the OMP decarboxylase family. Type 1 subfamily. In terms of assembly, homodimer.

It carries out the reaction orotidine 5'-phosphate + H(+) = UMP + CO2. It functions in the pathway pyrimidine metabolism; UMP biosynthesis via de novo pathway; UMP from orotate: step 2/2. Catalyzes the decarboxylation of orotidine 5'-monophosphate (OMP) to uridine 5'-monophosphate (UMP). The polypeptide is Orotidine 5'-phosphate decarboxylase (Nitrosococcus oceani (strain ATCC 19707 / BCRC 17464 / JCM 30415 / NCIMB 11848 / C-107)).